Here is a 297-residue protein sequence, read N- to C-terminus: Phosphoribosylaminoimidazole-succinocarboxamide synthase (297 aa).

The protein belongs to the SAICAR synthetase family.

The catalysed reaction is 5-amino-1-(5-phospho-D-ribosyl)imidazole-4-carboxylate + L-aspartate + ATP = (2S)-2-[5-amino-1-(5-phospho-beta-D-ribosyl)imidazole-4-carboxamido]succinate + ADP + phosphate + 2 H(+). It participates in purine metabolism; IMP biosynthesis via de novo pathway; 5-amino-1-(5-phospho-D-ribosyl)imidazole-4-carboxamide from 5-amino-1-(5-phospho-D-ribosyl)imidazole-4-carboxylate: step 1/2. In Mycobacterium tuberculosis (strain ATCC 25177 / H37Ra), this protein is Phosphoribosylaminoimidazole-succinocarboxamide synthase.